The sequence spans 557 residues: Probable transcription factor sol4 (557 aa).

The fungal transcription factor domain stretch occupies residues 26–186 (IQYFFEDINW…EREMRRRMFC (161 aa)). A disordered region spans residues 463–490 (SGTQTRSMPSTETLTYNSSSSTSYGDGH). Low complexity predominate over residues 472–485 (STETLTYNSSSSTS).

Its subcellular location is the nucleus. Probable transcription factor that regulates the expression of the gene cluster that mediates the biosynthesis of the phytotoxin solanapyrone, a causal agent of early blight disease of potato and tomato. This is Probable transcription factor sol4 (sol4) from Alternaria solani.